A 275-amino-acid polypeptide reads, in one-letter code: Diaminopimelate epimerase (275 aa).

Positions 12, 45, and 65 each coordinate substrate. Cys74 serves as the catalytic Proton donor. Substrate is bound by residues 75–76 (GN), Asn158, Asn191, and 209–210 (ER). Cys218 functions as the Proton acceptor in the catalytic mechanism. Residue 219–220 (GT) coordinates substrate.

The protein belongs to the diaminopimelate epimerase family. Homodimer.

Its subcellular location is the cytoplasm. It carries out the reaction (2S,6S)-2,6-diaminopimelate = meso-2,6-diaminopimelate. The protein operates within amino-acid biosynthesis; L-lysine biosynthesis via DAP pathway; DL-2,6-diaminopimelate from LL-2,6-diaminopimelate: step 1/1. Its function is as follows. Catalyzes the stereoinversion of LL-2,6-diaminopimelate (L,L-DAP) to meso-diaminopimelate (meso-DAP), a precursor of L-lysine and an essential component of the bacterial peptidoglycan. The chain is Diaminopimelate epimerase from Shewanella oneidensis (strain ATCC 700550 / JCM 31522 / CIP 106686 / LMG 19005 / NCIMB 14063 / MR-1).